The primary structure comprises 654 residues: Fructose-1,6-bisphosphatase class 3 (654 aa).

The tract at residues 288 to 307 (NPAFKPKKRPDKHERLTQRE) is disordered. Residues 298-307 (DKHERLTQRE) are compositionally biased toward basic and acidic residues.

Belongs to the FBPase class 3 family. Mn(2+) serves as cofactor.

The enzyme catalyses beta-D-fructose 1,6-bisphosphate + H2O = beta-D-fructose 6-phosphate + phosphate. Its pathway is carbohydrate biosynthesis; gluconeogenesis. This Staphylococcus aureus (strain bovine RF122 / ET3-1) protein is Fructose-1,6-bisphosphatase class 3.